Reading from the N-terminus, the 372-residue chain is Glutamate 5-kinase (372 aa).

K14 is an ATP binding site. The substrate site is built by S54, D141, and N153. Residue 173–174 (TD) participates in ATP binding. The PUA domain occupies 280 to 358 (RGHVVIDAGA…GEIEIVLGYM (79 aa)).

It belongs to the glutamate 5-kinase family.

The protein resides in the cytoplasm. The enzyme catalyses L-glutamate + ATP = L-glutamyl 5-phosphate + ADP. Its pathway is amino-acid biosynthesis; L-proline biosynthesis; L-glutamate 5-semialdehyde from L-glutamate: step 1/2. In terms of biological role, catalyzes the transfer of a phosphate group to glutamate to form L-glutamate 5-phosphate. This Burkholderia orbicola (strain MC0-3) protein is Glutamate 5-kinase.